The sequence spans 157 residues: 2-C-methyl-D-erythritol 2,4-cyclodiphosphate synthase (157 aa).

A divalent metal cation is bound by residues Asp-8 and His-10. 4-CDP-2-C-methyl-D-erythritol 2-phosphate is bound by residues Asp-8–His-10 and His-34–Ser-35. An a divalent metal cation-binding site is contributed by His-42. 4-CDP-2-C-methyl-D-erythritol 2-phosphate contacts are provided by residues Asp-56–Gly-58, Phe-61–Asp-65, Ala-100–Ala-106, Thr-132–Glu-135, Phe-139, and Arg-142.

It belongs to the IspF family. Homotrimer. Requires a divalent metal cation as cofactor.

It catalyses the reaction 4-CDP-2-C-methyl-D-erythritol 2-phosphate = 2-C-methyl-D-erythritol 2,4-cyclic diphosphate + CMP. Its pathway is isoprenoid biosynthesis; isopentenyl diphosphate biosynthesis via DXP pathway; isopentenyl diphosphate from 1-deoxy-D-xylulose 5-phosphate: step 4/6. Functionally, involved in the biosynthesis of isopentenyl diphosphate (IPP) and dimethylallyl diphosphate (DMAPP), two major building blocks of isoprenoid compounds. Catalyzes the conversion of 4-diphosphocytidyl-2-C-methyl-D-erythritol 2-phosphate (CDP-ME2P) to 2-C-methyl-D-erythritol 2,4-cyclodiphosphate (ME-CPP) with a corresponding release of cytidine 5-monophosphate (CMP). The sequence is that of 2-C-methyl-D-erythritol 2,4-cyclodiphosphate synthase from Edwardsiella ictaluri (strain 93-146).